A 173-amino-acid chain; its full sequence is Alpha-crystallin A chain (173 aa).

Met1 carries the N-acetylmethionine modification. Residues 1 to 63 form a required for complex formation with BFSP1 and BFSP2 region; sequence MDIAIQHPWF…RTVLDSGISE (63 aa). Gln6 carries the post-translational modification Deamidated glutamine; partial. Ser45 carries the phosphoserine modification. A Deamidated glutamine; partial modification is found at Gln50. The 111-residue stretch at 52–162 folds into the sHSP domain; the sequence is LFRTVLDSGI…GHSERAIPVS (111 aa). Lys70 carries the post-translational modification N6-acetyllysine. Gln90 is modified (deamidated glutamine; partial). The residue at position 99 (Lys99) is an N6-acetyllysine. His100 contacts Zn(2+). Asn101 is subject to Deamidated asparagine; partial. 2 residues coordinate Zn(2+): Glu102 and His107. Ser122 bears the Phosphoserine mark. Asn123 carries the deamidated asparagine; partial modification. Positions 144–173 are disordered; that stretch reads PKVPSGLDAGHSERAIPVSREEKPSSAPSS. Basic and acidic residues predominate over residues 153–167; that stretch reads GHSERAIPVSREEKP. A Zn(2+)-binding site is contributed by His154. Ser162 carries an O-linked (GlcNAc) serine glycan.

The protein belongs to the small heat shock protein (HSP20) family. Heteromer composed of three CRYAA and one CRYAB subunits. Inter-subunit bridging via zinc ions enhances stability, which is crucial as there is no protein turn over in the lens. Can also form homodimers and homotetramers (dimers of dimers) which serve as the building blocks of homooligomers. Within homooligomers, the zinc-binding motif is created from residues of 3 different molecules. His-100 and Glu-102 from one molecule are ligands of the zinc ion, and His-107 and His-154 residues from additional molecules complete the site with tetrahedral coordination geometry. Part of a complex required for lens intermediate filament formation composed of BFSP1, BFSP2 and CRYAA. In terms of processing, acetylation at Lys-70 may increase chaperone activity. Undergoes age-dependent proteolytical cleavage at the C-terminus.

The protein localises to the cytoplasm. It is found in the nucleus. Contributes to the transparency and refractive index of the lens. Acts as a chaperone, preventing aggregation of various proteins under a wide range of stress conditions. Required for the correct formation of lens intermediate filaments as part of a complex composed of BFSP1, BFSP2 and CRYAA. The protein is Alpha-crystallin A chain (CRYAA) of Tapirus indicus (Asiatic tapir).